A 1703-amino-acid chain; its full sequence is Gingipain R1 (1703 aa).

A signal peptide spans 1 to 20 (MNKFVSIALCSSLLGGMAFA). Residues 21-224 (QQTELGRNPN…RMFMNYEPGR (204 aa)) constitute a propeptide that is removed on maturation. 7 residues coordinate Ca(2+): D302, V324, D327, Y329, E331, E385, and H390. Catalysis depends on H435, which acts as the Proton donor. The active-site Nucleophile is the C468. 6 residues coordinate Ca(2+): F473, E482, D516, E517, E520, and H526. The disordered stretch occupies residues 940-968 (WDAPNGTPNPNPNPNPNPNPGTTTLSESF). A compositionally biased stretch (pro residues) spans 946 to 958 (TPNPNPNPNPNPN).

It belongs to the peptidase C25 family.

It is found in the secreted. The enzyme catalyses Hydrolysis of proteins and small molecule substrates, with a preference for Arg in P1.. Its function is as follows. Thiol protease. Acts synergistically with RgpB to catalyze the maturation of fimbrial subunits, such as FimA. Its proteolytic activity is a major factor in both periodontal tissue destruction and in evasion of host defense mechanisms. This Porphyromonas gingivalis (strain ATCC 33277 / DSM 20709 / CIP 103683 / JCM 12257 / NCTC 11834 / 2561) protein is Gingipain R1.